Consider the following 384-residue polypeptide: 8-amino-7-oxononanoate synthase (384 aa).

Residue R21 participates in substrate binding. A pyridoxal 5'-phosphate-binding site is contributed by 108-109 (GF). Substrate is bound at residue H133. S179, H207, and T233 together coordinate pyridoxal 5'-phosphate. K236 is subject to N6-(pyridoxal phosphate)lysine. Position 350 (T350) interacts with substrate.

Belongs to the class-II pyridoxal-phosphate-dependent aminotransferase family. BioF subfamily. In terms of assembly, homodimer. Pyridoxal 5'-phosphate serves as cofactor.

It catalyses the reaction 6-carboxyhexanoyl-[ACP] + L-alanine + H(+) = (8S)-8-amino-7-oxononanoate + holo-[ACP] + CO2. It participates in cofactor biosynthesis; biotin biosynthesis. In terms of biological role, catalyzes the decarboxylative condensation of pimeloyl-[acyl-carrier protein] and L-alanine to produce 8-amino-7-oxononanoate (AON), [acyl-carrier protein], and carbon dioxide. The protein is 8-amino-7-oxononanoate synthase of Erwinia tasmaniensis (strain DSM 17950 / CFBP 7177 / CIP 109463 / NCPPB 4357 / Et1/99).